We begin with the raw amino-acid sequence, 432 residues long: Enolase (432 aa).

Position 168 (glutamine 168) interacts with (2R)-2-phosphoglycerate. The active-site Proton donor is glutamate 210. Mg(2+) contacts are provided by aspartate 247, glutamate 288, and aspartate 315. Residues lysine 340, arginine 369, serine 370, and lysine 391 each coordinate (2R)-2-phosphoglycerate. Lysine 340 functions as the Proton acceptor in the catalytic mechanism.

Belongs to the enolase family. The cofactor is Mg(2+).

Its subcellular location is the cytoplasm. The protein localises to the secreted. It is found in the cell surface. The enzyme catalyses (2R)-2-phosphoglycerate = phosphoenolpyruvate + H2O. The protein operates within carbohydrate degradation; glycolysis; pyruvate from D-glyceraldehyde 3-phosphate: step 4/5. Functionally, catalyzes the reversible conversion of 2-phosphoglycerate (2-PG) into phosphoenolpyruvate (PEP). It is essential for the degradation of carbohydrates via glycolysis. In Microcystis aeruginosa (strain NIES-843 / IAM M-2473), this protein is Enolase.